The following is a 25-amino-acid chain: Antimicrobial peptide scolopin-2 (25 aa).

As to expression, expressed by the venom gland.

The protein resides in the secreted. Antimicrobial peptide against both Gram-positive, -negative and yeast. Also induces histamine release by mast cells and shows moderate hemolytic activities against both human and rabbit red cells. This Scolopendra mutilans (Chinese red-headed centipede) protein is Antimicrobial peptide scolopin-2.